The following is a 619-amino-acid chain: MAATAAASVVRYAPEDHTLPKPWKGLIDDRTGYLYFWNPETNVTQYEKPTPSLPPKFSPAVSVSSSVQVQQTDAYAPPKDDDKYSRGSERVSRFSEGGRSGPPYSNGAANGVGDSAYGAASTRVPLPSSAPASELSPEAYSRRHEITVSGGQVPPPLMSFEATGFPPELLREVLSAGFSAPTPIQAQSWPIAMQGRDIVAIAKTGSGKTLGYLIPGFLHLQRIRNDSRMGPTILVLSPTRELATQIQEEAVKFGRSSRISCTCLYGGAPKGPQLRDLERGADIVVATPGRLNDILEMRRISLRQISYLVLDEADRMLDMGFEPQIRKIVKEIPTKRQTLMYTATWPKGVRKIAADLLVNPAQVNIGNVDELVANKSITQHIEVVAPMEKQRRLEQILRSQEPGSKVIIFCSTKRMCDQLTRNLTRQFGAAAIHGDKSQPERDNVLNQFRSGRTPVLVATDVAARGLDVKDIRAVVNYDFPNGVEDYVHRIGRTGRAGATGQAFTFFGDQDSKHASDLIKILEGANQRVPPQIREMATRGGGGMNKFSRWGPPSGGRGRGGDSGYGGRGSFASRDSRSSNGWGRERERSRSPERFNRAPPPSSTGSPPRSFHETMMMKHR.

The residue at position 2 (alanine 2) is an N-acetylalanine. A WW domain is found at 17–51 (HTLPKPWKGLIDDRTGYLYFWNPETNVTQYEKPTP). A disordered region spans residues 47–139 (EKPTPSLPPK…APASELSPEA (93 aa)). Residues 61-71 (VSVSSSVQVQQ) show a composition bias toward low complexity. The span at 78-93 (PKDDDKYSRGSERVSR) shows a compositional bias: basic and acidic residues. Over residues 125–139 (PLPSSAPASELSPEA) the composition is skewed to low complexity. The residue at position 136 (serine 136) is a Phosphoserine. Positions 158-186 (MSFEATGFPPELLREVLSAGFSAPTPIQA) match the Q motif motif. Residues 189-363 (WPIAMQGRDI…ADLLVNPAQV (175 aa)) enclose the Helicase ATP-binding domain. 202–209 (AKTGSGKT) contacts ATP. The DEAD box signature appears at 311-314 (DEAD). In terms of domain architecture, Helicase C-terminal spans 392–536 (RLEQILRSQE…RVPPQIREMA (145 aa)). The segment at 528-619 (VPPQIREMAT…FHETMMMKHR (92 aa)) is disordered. Gly residues predominate over residues 552 to 568 (PSGGRGRGGDSGYGGRG). 2 stretches are compositionally biased toward basic and acidic residues: residues 582–595 (GRERERSRSPERFN) and 609–619 (SFHETMMMKHR).

This sequence belongs to the DEAD box helicase family. DDX5/DBP2 subfamily. Ubiquitous. Preferentially expressed in flowers and roots.

The protein localises to the nucleus. The catalysed reaction is ATP + H2O = ADP + phosphate + H(+). Its function is as follows. ATP-dependent RNA helicase involved nonsense-mediated mRNA decay and ribosome biogenesis through rRNA processing. The polypeptide is DEAD-box ATP-dependent RNA helicase 14 (RH14) (Arabidopsis thaliana (Mouse-ear cress)).